The primary structure comprises 201 residues: 3-isopropylmalate dehydratase small subunit 1 (201 aa).

This sequence belongs to the LeuD family. LeuD type 1 subfamily. As to quaternary structure, heterodimer of LeuC and LeuD.

It carries out the reaction (2R,3S)-3-isopropylmalate = (2S)-2-isopropylmalate. The protein operates within amino-acid biosynthesis; L-leucine biosynthesis; L-leucine from 3-methyl-2-oxobutanoate: step 2/4. Catalyzes the isomerization between 2-isopropylmalate and 3-isopropylmalate, via the formation of 2-isopropylmaleate. The polypeptide is 3-isopropylmalate dehydratase small subunit 1 (Salmonella typhimurium (strain LT2 / SGSC1412 / ATCC 700720)).